Reading from the N-terminus, the 1765-residue chain is RANBP2-like and GRIP domain-containing protein 8 (1765 aa).

The residue at position 19 (T19) is a Phosphothreonine. S21 carries the post-translational modification Phosphoserine. 3 TPR repeats span residues 26-59 (SMKGFYFAKLYYEAKEYDLAKKYICTYINVQERD), 60-93 (PKAHRFLGLLYELEENTEKAVECYRRSVELNPTQ), and 648-681 (EDAHITFAILDAVNGNIEDAVTAFESIKSVVSYW). A disordered region spans residues 760-804 (GPLYKNGSLRNADSEIKHSTPSPTKYSLSPSKSYKYSPETPPRWT). Positions 778–797 (STPSPTKYSLSPSKSYKYSP) are enriched in low complexity. Residues 1036–1172 (HFEPVVQMPE…FEECQRLLLD (137 aa)) form the RanBD1 1 domain. Disordered regions lie at residues 1216 to 1247 (TEEENKGSGTGVAGASDTTIKPNAENTGPTLE) and 1306 to 1330 (AKLNQSGTSVGTDEESVVTQEEERD). The span at 1231–1244 (SDTTIKPNAENTGP) shows a compositional bias: polar residues. Positions 1317–1329 (TDEESVVTQEEER) are enriched in acidic residues. The RanBD1 2 domain maps to 1333-1469 (YFEPVVPLPD…FDEAKTAQEK (137 aa)). Polar residues predominate over residues 1580–1593 (NNSETSSVAQSGSE). 2 disordered regions span residues 1580-1621 (NNSE…KNLS) and 1746-1765 (KGKLAAVAQDEEENPSRSSG). The segment covering 1594–1617 (SKVEPKKCELSKNSDIEQSSDSKV) has biased composition (basic and acidic residues). Positions 1702–1752 (REKSAANLEYLKNVLLQFIFLKPGSERERLLPVINTMLQLSPEEKGKLAAV) constitute a GRIP domain.

As to quaternary structure, interacts with GTP-bound ARL1.

This is RANBP2-like and GRIP domain-containing protein 8 (RGPD8) from Homo sapiens (Human).